The following is a 305-amino-acid chain: Tyrosine recombinase XerC (305 aa).

The region spanning 4–95 is the Core-binding (CB) domain; sequence TQIQELIIKW…AIKNFYKFLE (92 aa). The 183-residue stretch at 116–298 folds into the Tyr recombinase domain; it reads LLPKALSEEE…SIKHLETAYV (183 aa). Residues Arg-159, Lys-182, His-250, Arg-253, and His-276 contribute to the active site. Tyr-285 serves as the catalytic O-(3'-phospho-DNA)-tyrosine intermediate.

Belongs to the 'phage' integrase family. XerC subfamily. Forms a cyclic heterotetrameric complex composed of two molecules of XerC and two molecules of XerD.

Its subcellular location is the cytoplasm. Site-specific tyrosine recombinase, which acts by catalyzing the cutting and rejoining of the recombining DNA molecules. The XerC-XerD complex is essential to convert dimers of the bacterial chromosome into monomers to permit their segregation at cell division. It also contributes to the segregational stability of plasmids. The polypeptide is Tyrosine recombinase XerC (Rickettsia bellii (strain OSU 85-389)).